A 409-amino-acid chain; its full sequence is Multidrug resistance protein MdtG (409 aa).

10 consecutive transmembrane segments (helical) span residues 16-36 (LIVAWLGCFLTGAAFSLVMPF), 58-78 (IVFSITFLFSAIASPFWGGLA), 92-112 (LGMGIVMVLMGLAQNIWQFLI), 115-135 (ALLGLLGGFVPNANALIATQV), 146-166 (TLSTGGVSGALLGPMAGGLLA), 173-193 (PVFFITASVLILCFFVTLFCI), 224-244 (LFVTTLIIQVATGSIAPILTL), 256-276 (VAFISGMIASVPGVAALLLSA), 291-311 (ILITALIFSVLLLIPMSYVQT), and 379-399 (AVFLVTAGVVLFNAVYSWNSL).

The protein belongs to the major facilitator superfamily. DHA1 family. MdtG (TC 2.A.1.2.20) subfamily.

The protein localises to the cell inner membrane. Confers resistance to fosfomycin and deoxycholate. This chain is Multidrug resistance protein MdtG, found in Escherichia coli O9:H4 (strain HS).